Consider the following 95-residue polypeptide: Phosphoribosyl-ATP pyrophosphatase (95 aa).

It belongs to the PRA-PH family.

Its subcellular location is the cytoplasm. The enzyme catalyses 1-(5-phospho-beta-D-ribosyl)-ATP + H2O = 1-(5-phospho-beta-D-ribosyl)-5'-AMP + diphosphate + H(+). The protein operates within amino-acid biosynthesis; L-histidine biosynthesis; L-histidine from 5-phospho-alpha-D-ribose 1-diphosphate: step 2/9. The chain is Phosphoribosyl-ATP pyrophosphatase from Halobacterium salinarum (strain ATCC 29341 / DSM 671 / R1).